Consider the following 122-residue polypeptide: Ribonuclease P protein component (122 aa).

The protein belongs to the RnpA family. In terms of assembly, consists of a catalytic RNA component (M1 or rnpB) and a protein subunit.

The enzyme catalyses Endonucleolytic cleavage of RNA, removing 5'-extranucleotides from tRNA precursor.. In terms of biological role, RNaseP catalyzes the removal of the 5'-leader sequence from pre-tRNA to produce the mature 5'-terminus. It can also cleave other RNA substrates such as 4.5S RNA. The protein component plays an auxiliary but essential role in vivo by binding to the 5'-leader sequence and broadening the substrate specificity of the ribozyme. The sequence is that of Ribonuclease P protein component from Roseiflexus sp. (strain RS-1).